The sequence spans 265 residues: Mlc titration factor A (265 aa).

Zn(2+) is bound by residues His111, His148, His152, and Glu211.

This sequence belongs to the MtfA family. In terms of assembly, interacts with Mlc. Zn(2+) is required as a cofactor.

Its subcellular location is the cytoplasm. Its function is as follows. Involved in the modulation of the activity of the glucose-phosphotransferase system (glucose-PTS). Interacts with the transcriptional repressor Mlc, preventing its interaction with DNA and leading to the modulation of expression of genes regulated by Mlc, including ptsG, which encodes the PTS system glucose-specific EIICB component. Functionally, shows zinc-dependent metallopeptidase activity. This Escherichia coli (strain 55989 / EAEC) protein is Mlc titration factor A.